Here is a 663-residue protein sequence, read N- to C-terminus: Polyunsaturated fatty acid lipoxygenase ALOX15 (663 aa).

The 114-residue stretch at 2–115 (GVYRIRVSTG…ILNLPEGTGC (114 aa)) folds into the PLAT domain. The 548-residue stretch at 116–663 (TVVEDSQGLF…PSLVENSVAI (548 aa)) folds into the Lipoxygenase domain. Fe cation contacts are provided by His-361, His-366, His-541, His-545, and Ile-663.

This sequence belongs to the lipoxygenase family. As to quaternary structure, interacts with PEBP1; in response to IL13/interleukin-13, prevents the interaction of PEBP1 with RAF1 to activate the ERK signaling cascade. It depends on Fe cation as a cofactor. Found in pituitary and pineal glands as well as leukocytes, kidney, aorta, small intestine and cornea. Also expressed by resident peritoneal macrophages (at protein level).

It localises to the cytoplasm. The protein resides in the cytosol. It is found in the cell membrane. Its subcellular location is the lipid droplet. The enzyme catalyses (5Z,8Z,11Z,14Z)-eicosatetraenoate + O2 = (12S)-hydroperoxy-(5Z,8Z,10E,14Z)-eicosatetraenoate. It carries out the reaction (5Z,8Z,11Z,14Z)-eicosatetraenoate + O2 = (15S)-hydroperoxy-(5Z,8Z,11Z,13E)-eicosatetraenoate. It catalyses the reaction (9Z,12Z)-octadecadienoate + O2 = (13S)-hydroperoxy-(9Z,11E)-octadecadienoate. The catalysed reaction is (5Z,8Z,11Z,14Z)-eicosatetraenoate + 2 O2 = (14R,15S)-dihydroperoxy-(5Z,8Z,10E,12E)-eicosatetraenoate. The enzyme catalyses (5Z,8Z,11Z,14Z)-eicosatetraenoate + 2 O2 = (8S,15S)-dihydroperoxy-(5Z,9E,11Z,13E)-eicosatetraenoate. It carries out the reaction (14S,15R)-epoxy-(5Z,8Z,11Z)-eicosatrienoate + O2 = (8S)-hydroperoxy-(14S,15R)-epoxy-(5Z,9E,11Z)-eicosatrienoate. It catalyses the reaction (14S,15R)-epoxy-(5Z,8Z,11Z)-eicosatrienoate + O2 = (12S)-hydroperoxy-(14S,15R)-epoxy-(5Z,8Z,10E)-eicosatrienoate. The catalysed reaction is (14R,15S)-epoxy-(5Z,8Z,11Z)-eicosatrienoate + O2 = (5S)-hydroperoxy-(14R,15S)-epoxy-(6E,8Z,11Z)-eicosatrienoate. The enzyme catalyses (14R,15S)-epoxy-(5Z,8Z,11Z)-eicosatrienoate + O2 = (12S)-hydroperoxy-(14R,15S)-epoxy-(5Z,8Z,10E)-eicosatrienoate. It carries out the reaction (15R)-hydroperoxy-(5Z,8Z,11Z,13E)-eicosatetraenoate = 15-oxo-(5Z,8Z,11Z,13E)-eicosatetraenoate + H2O. It catalyses the reaction (15S)-hydroperoxy-(5Z,8Z,11Z,13E)-eicosatetraenoate = (14S,15S)-epoxy-(5Z,8Z,10E,12E)-eicosatetraenoate + H2O. The catalysed reaction is (12S)-hydroperoxy-(5Z,8Z,10E,14Z)-eicosatetraenoate = (8S)-hydroxy-(11S,12S)-epoxy-(5Z,9E,14Z)-eicosatrienoate. The enzyme catalyses (4Z,7Z,10Z,13Z,16Z)-docosapentaenoate + O2 = 14-hydroperoxy-(4Z,7Z,10Z,12E,16Z)-docosapentaenoate. It carries out the reaction (7Z,10Z,13Z,16Z,19Z)-docosapentaenoate + O2 = 14-hydroperoxy-(7Z,10Z,12E,16Z,19Z)-docosapentaenoate. It catalyses the reaction (4Z,7Z,10Z,13Z,16Z,19Z)-docosahexaenoate + O2 = (14S)-hydroperoxy-(4Z,7Z,10Z,12E,16Z,19Z)-docosahexaenoate. The catalysed reaction is (4Z,7Z,10Z,13Z,16Z,19Z)-docosahexaenoate + O2 = (17S)-hydroperoxy-(4Z,7Z,10Z,13Z,15E,19Z)-docosahexaenoate. The enzyme catalyses (7S)-hydroperoxy-(4Z,8E,10Z,13Z,16Z,19Z)-docosahexaenoate + O2 = (7S,14S)-dihydroperoxy-(4Z,8E,10Z,12E,16Z,19Z)-docosahexaenoate. It carries out the reaction (7S)-hydroperoxy-(4Z,8E,10Z,13Z,16Z,19Z)-docosahexaenoate + O2 = (7S,17S)-dihydroperoxy-(4Z,8E,10Z,13Z,15E,19Z)-docosahexaenoate. It catalyses the reaction (4Z,7Z,10Z,13Z,16Z,19Z)-docosahexaenoate + O2 = (11S)-hydroperoxy-(4Z,7Z,9E,13Z,16Z,19Z)-docosahexaenoate. The catalysed reaction is N-(5Z,8Z,11Z,14Z)-eicosatetraenoyl-taurine + O2 = N-(12S)-hydroperoxy-(5Z,8Z,10E,14Z)-eicosatetraenoyl-taurine. The enzyme catalyses N-(5Z,8Z,11Z,14Z)-eicosatetraenoyl-gamma-aminobutanoate + O2 = N-(12S)-hydroperoxy-(5Z,8Z,10E,14Z)-eicosatetraenoyl-gamma-aminobutanoate. It carries out the reaction N-(5Z,8Z,11Z,14Z)-eicosatetraenoyl-glycine + O2 = N-(12S)-hydroperoxy-(5Z,8Z,10E,14Z)-eicosatetraenoyl-glycine. It catalyses the reaction N-(5Z,8Z,11Z,14Z)-eicosatetraenoyl-L-alanine + O2 = N-(12S)-hydroperoxy-(5Z,8Z,10E,14Z)-eicosatetraenoyl-alanine. The catalysed reaction is N-(5Z,8Z,11Z,14Z)-eicosatetraenoyl-taurine + O2 = N-(15S)-hydroperoxy-(5Z,8Z,11Z,13E)-eicosatetraenoyl-taurine. The enzyme catalyses N-(5Z,8Z,11Z,14Z)-eicosatetraenoyl-gamma-aminobutanoate + O2 = N-(15S)-hydroperoxy-(5Z,8Z,11Z,13E)-eicosatetraenoyl-gamma-aminobutanoate. It carries out the reaction N-(5Z,8Z,11Z,14Z)-eicosatetraenoyl-glycine + O2 = N-(15S)-hydroperoxy-(5Z,8Z,11Z,13E)-eicosatetraenoyl-glycine. It catalyses the reaction N-(5Z,8Z,11Z,14Z)-eicosatetraenoyl-L-alanine + O2 = N-(15S)-hydroperoxy-(5Z,8Z,11Z,13E)-eicosatetraenoyl-alanine. The protein operates within lipid metabolism; hydroperoxy eicosatetraenoic acid biosynthesis. In terms of biological role, non-heme iron-containing dioxygenase that catalyzes the stereo-specific peroxidation of free and esterified polyunsaturated fatty acids generating a spectrum of bioactive lipid mediators. It inserts peroxyl groups at C12 or C15 of arachidonate ((5Z,8Z,11Z,14Z)-eicosatetraenoate) producing both 12-hydroperoxyeicosatetraenoate/12-HPETE and 15-hydroperoxyeicosatetraenoate/15-HPETE. It may then act on 12-HPETE to produce hepoxilins, which may show pro-inflammatory properties. Can also peroxidize linoleate ((9Z,12Z)-octadecadienoate) to 13-hydroperoxyoctadecadienoate. May participate in the sequential oxidations of DHA ((4Z,7Z,10Z,13Z,16Z,19Z)-docosahexaenoate) to generate specialized pro-resolving mediators (SPMs)like resolvin D5 ((7S,17S)-diHPDHA) and (7S,14S)-diHPDHA, that actively down-regulate the immune response and have anti-aggregation properties with platelets. Can convert epoxy fatty acids to hydroperoxy-epoxides derivatives followed by an intramolecular nucleophilic substitution leading to the formation of monocyclic endoperoxides. Plays an important role during the maintenance of self-tolerance by peroxidizing membrane-bound phosphatidylethanolamine which can then signal the sorting process for clearance of apoptotic cells during inflammation and prevent an autoimmune response. In addition to its role in the immune and inflammatory responses, this enzyme may play a role in epithelial wound healing in the cornea through production of lipoxin A4 (LXA(4)) and docosahexaenoic acid-derived neuroprotectin D1 (NPD1; 10R,17S-HDHA), both lipid autacoids exhibit anti-inflammatory and neuroprotective properties. Furthermore, it may regulate actin polymerization which is crucial for several biological processes such as the phagocytosis of apoptotic cells. It is also implicated in the generation of endogenous ligands for peroxisome proliferator activated receptor (PPAR-gamma), hence modulating macrophage development and function. It may also exert a negative effect on skeletal development by regulating bone mass through this pathway. As well as participates in ER stress and downstream inflammation in adipocytes, pancreatic islets, and liver. Finally, it is also involved in the cellular response to IL13/interleukin-13. This chain is Polyunsaturated fatty acid lipoxygenase ALOX15, found in Mus musculus (Mouse).